Here is a 135-residue protein sequence, read N- to C-terminus: FK506-binding protein 2 (135 aa).

The signal sequence occupies residues 1 to 17; that stretch reads MLLKSLFLLFLTAIAFA. One can recognise a PPIase FKBP-type domain in the interval 40–127; sequence GDLISVHYEG…VFVAELVDIA (88 aa). The short motif at 132 to 135 is the Prevents secretion from ER element; that stretch reads HDEL.

The protein belongs to the FKBP-type PPIase family. FKBP2 subfamily.

It localises to the endoplasmic reticulum. It carries out the reaction [protein]-peptidylproline (omega=180) = [protein]-peptidylproline (omega=0). Its activity is regulated as follows. Inhibited by both FK506 and rapamycin. Its function is as follows. PPIases accelerate the folding of proteins. It catalyzes the cis-trans isomerization of proline imidic peptide bonds in oligopeptides. The sequence is that of FK506-binding protein 2 (FPR2) from Debaryomyces hansenii (strain ATCC 36239 / CBS 767 / BCRC 21394 / JCM 1990 / NBRC 0083 / IGC 2968) (Yeast).